The following is a 66-amino-acid chain: Beta-toxin Cbo2 (66 aa).

In terms of domain architecture, LCN-type CS-alpha/beta spans 1–66; the sequence is KEGYIVNYHD…VWPLPKKTCN (66 aa). 4 disulfides stabilise this stretch: Cys-12–Cys-65, Cys-16–Cys-41, Cys-25–Cys-46, and Cys-29–Cys-48. Asparagine amide is present on Asn-66.

The protein belongs to the long (4 C-C) scorpion toxin superfamily. Sodium channel inhibitor family. Beta subfamily. In terms of tissue distribution, expressed by the venom gland.

The protein resides in the secreted. Its function is as follows. Beta toxins bind voltage-independently at site-4 of sodium channels and shift the voltage of activation toward more negative potentials thereby affecting sodium channel activation and promoting spontaneous and repetitive firing. A mixture of Cbo2 and Cbo3 is weakly active on the human voltage-gated sodium channels Nav1.4/SCN4A and Nav1.6/SCN8A when tested at 200 nM. In vivo, is toxic to mice when intraperitoneally injected. This is Beta-toxin Cbo2 from Centruroides bonito (Scorpion).